The following is a 153-amino-acid chain: Large ribosomal subunit protein bL9 (153 aa).

This sequence belongs to the bacterial ribosomal protein bL9 family.

Binds to the 23S rRNA. This is Large ribosomal subunit protein bL9 from Mycoplasma mycoides subsp. mycoides SC (strain CCUG 32753 / NCTC 10114 / PG1).